Reading from the N-terminus, the 99-residue chain is Meromycolate extension acyl carrier protein (99 aa).

The Carrier domain occupies 3–81 (ATQEEIIAGL…DVVAYIQKLE (79 aa)). S41 carries the O-(pantetheine 4'-phosphoryl)serine modification. Residue K79 forms an Isoglutamyl lysine isopeptide (Lys-Gln) (interchain with Q-Cter in protein Pup) linkage.

It belongs to the acyl carrier protein (ACP) family. In terms of processing, 4'-phosphopantetheine is transferred from CoA to a specific serine of apo-AcpM.

It is found in the cytoplasm. Acyl carrier protein involved in meromycolate extension. The sequence is that of Meromycolate extension acyl carrier protein (acpM) from Mycolicibacterium smegmatis (strain ATCC 700084 / mc(2)155) (Mycobacterium smegmatis).